The following is a 486-amino-acid chain: CUGBP Elav-like family member 4 (486 aa).

The interval 1 to 298 (MYIKMATLAN…AAFAAAQMQQ (298 aa)) is sufficient for RNA-binding and MSE-dependent splicing activity. Positions 18-28 (LSTNGLGSSPG) are enriched in polar residues. Disordered stretches follow at residues 18–39 (LSTN…LSHS) and 121–149 (LPGM…QPPS). The RRM 1 domain maps to 54–135 (IKLFIGQIPR…RPIQVKPADS (82 aa)). Residues 138-149 (RGGSSCLRQPPS) show a composition bias toward polar residues. Residues 152 to 232 (RKLFVGMLNK…SSLVVKFADT (81 aa)) form the RRM 2 domain. Positions 239–258 (RRMQQMAGQMGMFNPMAIPF) are necessary for TNNT2 exon 5 inclusion. Residues 404–479 (PQPPPMIPQQ…KRLKVQLKRP (76 aa)) form the RRM 3 domain.

The protein belongs to the CELF/BRUNOL family. In terms of tissue distribution, ubiquitous. Strongly expressed in the cerebellum, hippocampus, amygdala, temporal and frontal cortex and frontal lobes.

The protein resides in the nucleus. Its subcellular location is the cytoplasm. RNA-binding protein implicated in the regulation of pre-mRNA alternative splicing. Mediates exon inclusion and/or exclusion in pre-mRNA that are subject to tissue-specific and developmentally regulated alternative splicing. Specifically activates exon 5 inclusion of cardiac isoforms of TNNT2 during heart remodeling at the juvenile to adult transition. Promotes exclusion of both the smooth muscle (SM) and non-muscle (NM) exons in actinin pre-mRNAs. Activates the splicing of MAPT/Tau exon 10. Binds to muscle-specific splicing enhancer (MSE) intronic sites flanking the alternative exon 5 of TNNT2 pre-mRNA. This Homo sapiens (Human) protein is CUGBP Elav-like family member 4 (CELF4).